The chain runs to 24 residues: Brevinin-1SY (24 aa).

A disulfide bridge connects residues Cys-18 and Cys-24.

Expressed by the skin glands.

Its subcellular location is the secreted. Its function is as follows. Antibacterial activity against Gram-positive bacterium S.aureus and Gram-negative bacterium E.coli. The sequence is that of Brevinin-1SY from Lithobates sylvaticus (Wood frog).